The chain runs to 153 residues: Large ribosomal subunit protein uL22 (153 aa).

This sequence belongs to the universal ribosomal protein uL22 family. In terms of assembly, part of the 50S ribosomal subunit.

Its function is as follows. This protein binds specifically to 23S rRNA. It makes multiple contacts with different domains of the 23S rRNA in the assembled 50S subunit and ribosome. Functionally, the globular domain of the protein is located near the polypeptide exit tunnel on the outside of the subunit, while an extended beta-hairpin is found that lines the wall of the exit tunnel in the center of the 70S ribosome. The sequence is that of Large ribosomal subunit protein uL22 from Methanococcus maripaludis (strain DSM 14266 / JCM 13030 / NBRC 101832 / S2 / LL).